Reading from the N-terminus, the 316-residue chain is Insulin-like growth factor-binding protein 2 (316 aa).

A signal peptide spans 1–29; the sequence is MLPRLGGTALSLLPLLLLLLGTGGRGARA. The 96-residue stretch at 31–126 folds into the IGFBP N-terminal domain; the sequence is VLFRCPPCTP…VLGEGTCEKR (96 aa). Intrachain disulfides connect C35/C76, C38/C78, C46/C79, C68/C82, C90/C103, and C97/C123. The segment at 189–217 is disordered; the sequence is QHRQMGKGGKHHLGLEEPKKLRPPPARTP. Residues 215 to 297 form the Thyroglobulin type-1 domain; the sequence is RTPCQQELDQ…APTIRGDPEC (83 aa). Cystine bridges form between C218-C252, C263-C274, and C276-C297. The Cell attachment site signature appears at 292-294; it reads RGD.

Interacts with IGF1. Interacts with IGF2. Interacts (via RGD motif) with integrin alpha5/ITGA5; this interaction induces cell migration, adhesion or apoptosis according to the context. Interacts with PTPRB; this interaction leads to PTPRB dimerization and inactivation. In terms of processing, cleaved by MMP9 leading to release of free IGF2 from IGFBP2-IGF2 complex, which contributes to enhance the motility and the growth of astrocytes. O-glycosylated.

It is found in the secreted. Functionally, may have both growth-inhibiting and growth-promoting effects, depending on tissue type; increases IGF-induced DNA synthesis in the uterine epithelium. IGF-binding proteins prolong the half-life of the IGFs and have been shown to either inhibit or stimulate the growth promoting effects of the IGFs on cell culture. They alter the interaction of IGFs with their cell surface receptors. Multifunctional protein that plays a critical role in regulating the availability of IGFs such as IGF1 and IGF2 to their receptors and thereby regulates IGF-mediated cellular processes including proliferation, differentiation, and apoptosis in a cell-type specific manner. Functions coordinately with receptor protein tyrosine phosphatase beta/PTPRB and the IGF1 receptor to regulate IGF1-mediated signaling by stimulating the phosphorylation of PTEN leading to its inactivation and AKT1 activation. Plays a positive role in cell migration via interaction with integrin alpha5/ITGA5 through an RGD motif. Additionally, interaction with ITGA5/ITGB1 enhances the adhesion of endothelial progenitor cells to endothelial cells. Upon mitochondrial damage, facilitates apoptosis with ITGA5 of podocytes, and then activates the phosphorylation of focal adhesion kinase (FAK)-mediated mitochondrial injury. In Sus scrofa (Pig), this protein is Insulin-like growth factor-binding protein 2 (IGFBP2).